Reading from the N-terminus, the 142-residue chain is Large ribosomal subunit protein uL11 (142 aa).

It belongs to the universal ribosomal protein uL11 family. In terms of assembly, part of the ribosomal stalk of the 50S ribosomal subunit. Interacts with L10 and the large rRNA to form the base of the stalk. L10 forms an elongated spine to which L12 dimers bind in a sequential fashion forming a multimeric L10(L12)X complex. In terms of processing, one or more lysine residues are methylated.

Functionally, forms part of the ribosomal stalk which helps the ribosome interact with GTP-bound translation factors. This Xanthomonas oryzae pv. oryzae (strain MAFF 311018) protein is Large ribosomal subunit protein uL11.